The primary structure comprises 428 residues: Serine--tRNA ligase (428 aa).

Residue 235-237 participates in L-serine binding; that stretch reads TAE. 266 to 268 is a binding site for ATP; the sequence is RSE. Position 289 (Glu289) interacts with L-serine. 353-356 provides a ligand contact to ATP; sequence EISS. Position 389 (Ser389) interacts with L-serine.

Belongs to the class-II aminoacyl-tRNA synthetase family. Type-1 seryl-tRNA synthetase subfamily. Homodimer. The tRNA molecule binds across the dimer.

It localises to the cytoplasm. The catalysed reaction is tRNA(Ser) + L-serine + ATP = L-seryl-tRNA(Ser) + AMP + diphosphate + H(+). It catalyses the reaction tRNA(Sec) + L-serine + ATP = L-seryl-tRNA(Sec) + AMP + diphosphate + H(+). It participates in aminoacyl-tRNA biosynthesis; selenocysteinyl-tRNA(Sec) biosynthesis; L-seryl-tRNA(Sec) from L-serine and tRNA(Sec): step 1/1. In terms of biological role, catalyzes the attachment of serine to tRNA(Ser). Is also able to aminoacylate tRNA(Sec) with serine, to form the misacylated tRNA L-seryl-tRNA(Sec), which will be further converted into selenocysteinyl-tRNA(Sec). The chain is Serine--tRNA ligase from Shewanella frigidimarina (strain NCIMB 400).